The primary structure comprises 142 residues: Transcriptional regulator MraZ (142 aa).

SpoVT-AbrB domains lie at 5–47 (EYPY…PLAS) and 76–119 (ANKA…NPGR).

It belongs to the MraZ family. In terms of assembly, forms oligomers.

The protein localises to the cytoplasm. Its subcellular location is the nucleoid. This Deinococcus deserti (strain DSM 17065 / CIP 109153 / LMG 22923 / VCD115) protein is Transcriptional regulator MraZ.